A 4912-amino-acid chain; its full sequence is Probable E3 ubiquitin-protein ligase HERC2 (4912 aa).

Positions 1-67 (MFNRQASGGA…GSGSAAPPSH (67 aa)) are disordered. Gly residues predominate over residues 8–17 (GGAGSSGQGA). The span at 18–31 (GSSQTASAAPVSAG) shows a compositional bias: low complexity. Composition is skewed to gly residues over residues 32–41 (VGVGGGGGAS) and 49–59 (SAAGSGSGSGS). RCC1 repeat units follow at residues 634-685 (NHNA…AITC), 686-739 (GGNL…ALTS), 741-789 (GLVF…ALSS), 791-843 (GQLY…ALSS), and 844-897 (SGEV…VWTQ). Disordered stretches follow at residues 1102 to 1129 (RLSP…STSP), 1428 to 1475 (QLLQ…PGRG), and 1659 to 1681 (QEQE…EEET). The span at 1446-1458 (SHSCHSTAGNTPT) shows a compositional bias: polar residues. Position 1776 is a phosphothreonine (threonine 1776). Residues 1917–1990 (SGPDLAKLMK…QYDLQLADSA (74 aa)) enclose the MIB/HERC2 domain. 2 disordered regions span residues 1994–2018 (ASPT…SHPS) and 2381–2412 (GSIY…SGSG). Positions 2396–2412 (ESQQPGEQDQQLSSGSG) are enriched in polar residues. The UBA domain maps to 2511 to 2557 (ATDAQLIGQIMEMGFTRRTVELALKQLSLQAEIMPTPEQIVQWILEH). A disordered region spans residues 2572–2620 (LASSASSHDPEADSDNECPSSNSTTSSSTSSDTVEGQPMAVSGPAPPVK). Residues 2591-2604 (SSNSTTSSSTSSDT) show a composition bias toward low complexity. A CPH domain is found at 2624-2699 (RKDFQTADLY…VCFVHIELVE (76 aa)). One can recognise a DOC domain in the interval 2780–2958 (TSATLPSLGD…FLASEYSAGV (179 aa)). RCC1 repeat units follow at residues 2985 to 3036 (PCTV…IVSQ), 3037 to 3090 (DGKV…ALTL), 3091 to 3142 (DGKV…AISS), 3144 to 3194 (GELY…TLAL), 3197 to 3248 (DGAV…ALTR), 3250 to 3300 (GEVW…AVTD), and 3302 to 3352 (GQVY…AWGL). Disordered stretches follow at residues 3352–3374 (LPNA…RDPL) and 3953–4000 (LPSS…EQPD). The span at 3974-3988 (LNSTTSLSSSTVSNV) shows a compositional bias: low complexity. RCC1 repeat units lie at residues 4049-4099 (STIY…AVTP), 4101-4153 (GKLF…ALTT), 4155-4205 (GEVY…AITA), 4207-4259 (GHVL…CITD), 4261-4311 (DNVW…ALTK), 4313-4363 (GAVY…ACSD), and 4365-4415 (GEVY…ALST). In terms of domain architecture, HECT spans 4547 to 4882 (ALALPHRVWK…IHFCKSIDTD (336 aa)). The active-site Glycyl thioester intermediate is the cysteine 4850. The segment at 4891–4912 (EPTEATGSEDNSDLESVASHEG) is disordered.

Its subcellular location is the cytoplasm. It is found in the cytoskeleton. It localises to the microtubule organizing center. The protein resides in the centrosome. The protein localises to the centriole. The enzyme catalyses S-ubiquitinyl-[E2 ubiquitin-conjugating enzyme]-L-cysteine + [acceptor protein]-L-lysine = [E2 ubiquitin-conjugating enzyme]-L-cysteine + N(6)-ubiquitinyl-[acceptor protein]-L-lysine.. It participates in protein modification; protein ubiquitination. Functionally, probable E3 ubiquitin-protein ligase which accepts ubiquitin from an E2 ubiquitin-conjugating enzyme in the form of a thioester and then directly transfers the ubiquitin to targeted substrates. In Drosophila melanogaster (Fruit fly), this protein is Probable E3 ubiquitin-protein ligase HERC2 (HERC2).